Consider the following 213-residue polypeptide: Adenylate kinase (213 aa).

14–19 (GSGKGT) contacts ATP. The segment at 34-63 (STGDLLRAIIREGTPNGLKAKAYLDKGAFV) is NMP. AMP is bound by residues Thr35, Arg40, 61 to 63 (AFV), 89 to 92 (GFPR), and Gln96. The segment at 129–162 (SRFLCPSCSRIYNTSQGHTECPDCHVPLIRRSDD) is LID. Arg130 contacts ATP. Zn(2+)-binding residues include Cys133 and Cys136. Residue 139-140 (IY) participates in ATP binding. Zn(2+) contacts are provided by Cys149 and Cys152. AMP is bound by residues Arg159 and Arg170. ATP is bound at residue Asn198.

It belongs to the adenylate kinase family. As to quaternary structure, monomer.

The protein localises to the cytoplasm. It catalyses the reaction AMP + ATP = 2 ADP. It participates in purine metabolism; AMP biosynthesis via salvage pathway; AMP from ADP: step 1/1. In terms of biological role, catalyzes the reversible transfer of the terminal phosphate group between ATP and AMP. Plays an important role in cellular energy homeostasis and in adenine nucleotide metabolism. The protein is Adenylate kinase of Chlamydia pneumoniae (Chlamydophila pneumoniae).